The following is a 385-amino-acid chain: GDSL esterase/lipase 5 (385 aa).

The N-terminal stretch at 1–35 is a signal peptide; it reads MRESTLMEKVTRRTISSFIFFIVSSTILFLAGKSS. Asn-45 carries an N-linked (GlcNAc...) asparagine glycan. Catalysis depends on Ser-55, which acts as the Nucleophile. 4 N-linked (GlcNAc...) asparagine glycosylation sites follow: Asn-66, Asn-194, Asn-211, and Asn-289. Active-site residues include Asp-345 and His-348.

Belongs to the 'GDSL' lipolytic enzyme family.

It is found in the secreted. The polypeptide is GDSL esterase/lipase 5 (GLIP5) (Arabidopsis thaliana (Mouse-ear cress)).